A 319-amino-acid chain; its full sequence is MDPQNQHGSGSSLVVIQQPALDNRQRLDYEREIQPAAILSLDQIKAIRGSNEYTEGPSVVKRPAPRTAPRQEKHERTHEIIPINVNNNYEHRPTSHLGHAGLSNNTRGPILSRSTSTGSAASSGSNSSASSEQGLLGRSPPTRPIPGHRSERAIRTQPKQLIVDDLKGSLKEDLTQHKFICEQCGKCKCGECTAPRTLPSCLACNRQCLCSAESMVEYGTCMCLVKGIFYHCSNDDEGDSYSDNPCSCSQSQCCSRYLCMGAMSLFLPCLLCYPPAKGCLKLCRGCYDWIHRPGCRCKNSNTVYCKLESCPSRGLGKPS.

M1 is modified (N-acetylmethionine). The disordered stretch occupies residues 54-157 (TEGPSVVKRP…HRSERAIRTQ (104 aa)). Basic and acidic residues predominate over residues 69-79 (PRQEKHERTHE). The segment covering 112–131 (SRSTSTGSAASSGSNSSASS) has biased composition (low complexity). In terms of domain architecture, SPR spans 183 to 295 (QCGKCKCGEC…CYDWIHRPGC (113 aa)).

It belongs to the sprouty family. As to quaternary structure, forms heterodimers with SPRY2. Interacts with TESK1. Interacts with CAV1 (via C-terminus).

It localises to the cytoplasm. It is found in the membrane. Its function is as follows. Inhibits fibroblast growth factor (FGF)-induced retinal lens fiber differentiation, probably by inhibiting FGF-mediated phosphorylation of ERK1/2. Inhibits TGFB-induced epithelial-to-mesenchymal transition in lens epithelial cells. This is Protein sprouty homolog 1 (SPRY1) from Bos taurus (Bovine).